The chain runs to 124 residues: UPF0375 protein Y45F10C.4 (124 aa).

An N-terminal signal peptide occupies residues 1 to 23 (MNFLPSTVLLLSFVVAIISGSFS). N-linked (GlcNAc...) asparagine glycosylation is found at N36 and N62.

The protein belongs to the UPF0375 family.

The protein localises to the secreted. The sequence is that of UPF0375 protein Y45F10C.4 from Caenorhabditis elegans.